The sequence spans 196 residues: ATP-dependent Clp protease proteolytic subunit 1 (196 aa).

Serine 96 serves as the catalytic Nucleophile. Histidine 121 is an active-site residue.

Belongs to the peptidase S14 family. Fourteen ClpP subunits assemble into 2 heptameric rings which stack back to back to give a disk-like structure with a central cavity, resembling the structure of eukaryotic proteasomes.

Its subcellular location is the cytoplasm. The catalysed reaction is Hydrolysis of proteins to small peptides in the presence of ATP and magnesium. alpha-casein is the usual test substrate. In the absence of ATP, only oligopeptides shorter than five residues are hydrolyzed (such as succinyl-Leu-Tyr-|-NHMec, and Leu-Tyr-Leu-|-Tyr-Trp, in which cleavage of the -Tyr-|-Leu- and -Tyr-|-Trp bonds also occurs).. In terms of biological role, cleaves peptides in various proteins in a process that requires ATP hydrolysis. Has a chymotrypsin-like activity. Plays a major role in the degradation of misfolded proteins. The chain is ATP-dependent Clp protease proteolytic subunit 1 from Prochlorococcus marinus (strain NATL2A).